A 295-amino-acid chain; its full sequence is 4-diphosphocytidyl-2-C-methyl-D-erythritol kinase (295 aa).

K10 is an active-site residue. P97 to S107 is a binding site for ATP. D139 is a catalytic residue.

It belongs to the GHMP kinase family. IspE subfamily. In terms of assembly, homodimer.

The catalysed reaction is 4-CDP-2-C-methyl-D-erythritol + ATP = 4-CDP-2-C-methyl-D-erythritol 2-phosphate + ADP + H(+). It participates in isoprenoid biosynthesis; isopentenyl diphosphate biosynthesis via DXP pathway; isopentenyl diphosphate from 1-deoxy-D-xylulose 5-phosphate: step 3/6. Catalyzes the phosphorylation of the position 2 hydroxy group of 4-diphosphocytidyl-2C-methyl-D-erythritol. This chain is 4-diphosphocytidyl-2-C-methyl-D-erythritol kinase, found in Blochmanniella pennsylvanica (strain BPEN).